The primary structure comprises 104 residues: NADH-quinone oxidoreductase subunit K (104 aa).

The next 3 membrane-spanning stretches (helical) occupy residues Val-4–Ala-24, Val-31–Phe-51, and Leu-67–Leu-87.

The protein belongs to the complex I subunit 4L family. As to quaternary structure, NDH-1 is composed of 14 different subunits. Subunits NuoA, H, J, K, L, M, N constitute the membrane sector of the complex.

It localises to the cell membrane. The catalysed reaction is a quinone + NADH + 5 H(+)(in) = a quinol + NAD(+) + 4 H(+)(out). Its function is as follows. NDH-1 shuttles electrons from NADH, via FMN and iron-sulfur (Fe-S) centers, to quinones in the respiratory chain. The immediate electron acceptor for the enzyme in this species is believed to be a menaquinone. Couples the redox reaction to proton translocation (for every two electrons transferred, four hydrogen ions are translocated across the cytoplasmic membrane), and thus conserves the redox energy in a proton gradient. The sequence is that of NADH-quinone oxidoreductase subunit K from Bacillus cereus (strain AH820).